The sequence spans 203 residues: Thymidylate kinase (203 aa).

14–21 (GGEGIGKS) provides a ligand contact to ATP.

Belongs to the thymidylate kinase family.

It catalyses the reaction dTMP + ATP = dTDP + ADP. In terms of biological role, phosphorylation of dTMP to form dTDP in both de novo and salvage pathways of dTTP synthesis. The sequence is that of Thymidylate kinase from Rickettsia conorii (strain ATCC VR-613 / Malish 7).